The chain runs to 235 residues: Large ribosomal subunit protein uL1 (235 aa).

It belongs to the universal ribosomal protein uL1 family. Part of the 50S ribosomal subunit.

Its function is as follows. Binds directly to 23S rRNA. The L1 stalk is quite mobile in the ribosome, and is involved in E site tRNA release. In terms of biological role, protein L1 is also a translational repressor protein, it controls the translation of the L11 operon by binding to its mRNA. This Halothermothrix orenii (strain H 168 / OCM 544 / DSM 9562) protein is Large ribosomal subunit protein uL1.